The chain runs to 285 residues: Probable endonuclease 4 (285 aa).

The Zn(2+) site is built by histidine 69, histidine 109, glutamate 145, aspartate 179, histidine 182, histidine 216, aspartate 229, histidine 231, and glutamate 261.

The protein belongs to the AP endonuclease 2 family. Zn(2+) is required as a cofactor.

It carries out the reaction Endonucleolytic cleavage to 5'-phosphooligonucleotide end-products.. In terms of biological role, endonuclease IV plays a role in DNA repair. It cleaves phosphodiester bonds at apurinic or apyrimidinic (AP) sites, generating a 3'-hydroxyl group and a 5'-terminal sugar phosphate. This chain is Probable endonuclease 4, found in Salmonella typhimurium (strain LT2 / SGSC1412 / ATCC 700720).